Consider the following 276-residue polypeptide: NAD kinase (276 aa).

The Proton acceptor role is filled by aspartate 66. NAD(+) contacts are provided by residues 66–67, 139–140, aspartate 168, 179–184, and glutamine 234; these read DG, ND, and TAYNIS.

It belongs to the NAD kinase family. Requires a divalent metal cation as cofactor.

It localises to the cytoplasm. It carries out the reaction NAD(+) + ATP = ADP + NADP(+) + H(+). Functionally, involved in the regulation of the intracellular balance of NAD and NADP, and is a key enzyme in the biosynthesis of NADP. Catalyzes specifically the phosphorylation on 2'-hydroxyl of the adenosine moiety of NAD to yield NADP. The protein is NAD kinase of Campylobacter lari (strain RM2100 / D67 / ATCC BAA-1060).